The sequence spans 201 residues: Large ribosomal subunit protein uL4 (201 aa).

Residues 39–67 (ARQGSRAQKTRSEVAGGGRKPWKQKGSGR) are disordered.

Belongs to the universal ribosomal protein uL4 family. As to quaternary structure, part of the 50S ribosomal subunit.

Functionally, one of the primary rRNA binding proteins, this protein initially binds near the 5'-end of the 23S rRNA. It is important during the early stages of 50S assembly. It makes multiple contacts with different domains of the 23S rRNA in the assembled 50S subunit and ribosome. Its function is as follows. Forms part of the polypeptide exit tunnel. This Marinomonas sp. (strain MWYL1) protein is Large ribosomal subunit protein uL4.